A 336-amino-acid chain; its full sequence is Fimbrial adhesin PapGII (336 aa).

The N-terminal stretch at 1-20 is a signal peptide; sequence MKKWFPALLFSLCVSGESSA. Disulfide bonds link cysteine 64–cysteine 138 and cysteine 217–cysteine 249. D-galactose is bound by residues glutamate 79 and 124 to 127; that span reads GYKW.

Belongs to the adhesin PapG family.

The protein resides in the secreted. It is found in the fimbrium. Its function is as follows. Tip adhesin component of type P pili that plays a critical role in kidney infection through targeted interaction with the globoseries glycolipids containing the Gal-alpha(1-4)-Gal disaccharide present on uroepithelial cells. In turn, transcriptionally regulates host gene expression in kidney cells, leading to inflammatory pathway activation and renal tissue damage. Acts thereby as key determinant of invasive uropathogenic E.coli (UPEC), which cause pyelonephritis and urinary-source bacteremia. This Escherichia coli O6:H1 (strain CFT073 / ATCC 700928 / UPEC) protein is Fimbrial adhesin PapGII.